Consider the following 90-residue polypeptide: Probable Fe(2+)-trafficking protein (90 aa).

The protein belongs to the Fe(2+)-trafficking protein family.

Functionally, could be a mediator in iron transactions between iron acquisition and iron-requiring processes, such as synthesis and/or repair of Fe-S clusters in biosynthetic enzymes. In Paraburkholderia xenovorans (strain LB400), this protein is Probable Fe(2+)-trafficking protein.